Here is a 130-residue protein sequence, read N- to C-terminus: Small ribosomal subunit protein uS9 (130 aa).

Belongs to the universal ribosomal protein uS9 family.

The sequence is that of Small ribosomal subunit protein uS9 from Bacillus velezensis (strain DSM 23117 / BGSC 10A6 / LMG 26770 / FZB42) (Bacillus amyloliquefaciens subsp. plantarum).